The sequence spans 494 residues: Glutamate--tRNA ligase (494 aa).

The 'HIGH' region signature appears at 9–19 (PSPTGPLHIGS). The short motif at 249–253 (KLSKR) is the 'KMSKS' region element. K252 lines the ATP pocket.

This sequence belongs to the class-I aminoacyl-tRNA synthetase family. Glutamate--tRNA ligase type 1 subfamily. As to quaternary structure, monomer.

The protein localises to the cytoplasm. The enzyme catalyses tRNA(Glu) + L-glutamate + ATP = L-glutamyl-tRNA(Glu) + AMP + diphosphate. Its function is as follows. Catalyzes the attachment of glutamate to tRNA(Glu) in a two-step reaction: glutamate is first activated by ATP to form Glu-AMP and then transferred to the acceptor end of tRNA(Glu). This chain is Glutamate--tRNA ligase, found in Azobacteroides pseudotrichonymphae genomovar. CFP2.